The sequence spans 142 residues: Small ribosomal subunit protein uS12 (142 aa).

Residues 1-30 (MGKTHGMGAARKLKSHRRTQRWADKSYKKS) are disordered. Residues 11-20 (RKLKSHRRTQ) are compositionally biased toward basic residues. Residues 21–30 (RWADKSYKKS) are compositionally biased toward basic and acidic residues. P61 is subject to Hydroxyproline.

The protein belongs to the universal ribosomal protein uS12 family.

In Euphorbia esula (Leafy spurge), this protein is Small ribosomal subunit protein uS12 (RPS23).